Consider the following 499-residue polypeptide: MRPLLEMRGITKRFPGVVALDGVDFELLPGEVHVLLGENGAGKSTLIKILSGAYRPDGGEILMDGRPVEIRSAAEARRLGISTIYQEFNLVPQLTVAENIHLGRQPRRFGVVDRGAMERAARELLERLGIRVDPRARVADLGVARRQMVEIAKALGLRARVLIMDEPTAALSEREVRQLFRIVRRLKEEGVGVVFISHHLEEVAEIGERVTVLRDGRLVGRVSADAGRDELVRMMVGRSIEEQFPRRRTEPGEVLLEVRGLGRRGVLRDVSLRVRAGEIVGVAGLVGAGRTELARAIFGLDPADSGEVLVEGRPLEAPGPQEARRRGVGFVTEDRQGQGIVPPLSVAENLALASLERYLRGRVLVDRGRLLRRAREIVQSLRIRTPSLEQEIRYLSGGNQQKAVIGRWMLAGSRVLIMDEPTRGVDVGAKVEIYELMNRLTEEGAGILMISSEMPEVLGMSDRVLVMSGGRITGELPAEEATQERVMGLATAGSEAAVG.

2 consecutive ABC transporter domains span residues 5-240 (LEMR…GRSI) and 249-494 (TEPG…TAGS). 37 to 44 (GENGAGKS) is an ATP binding site.

The protein belongs to the ABC transporter superfamily. Ribose importer (TC 3.A.1.2.1) family. As to quaternary structure, the complex is composed of an ATP-binding protein (RbsA), two transmembrane proteins (RbsC) and a solute-binding protein (RbsB).

The protein resides in the cell membrane. The enzyme catalyses D-ribose(out) + ATP + H2O = D-ribose(in) + ADP + phosphate + H(+). Functionally, part of the ABC transporter complex RbsABC involved in ribose import. Responsible for energy coupling to the transport system. The sequence is that of Ribose import ATP-binding protein RbsA 1 from Rubrobacter xylanophilus (strain DSM 9941 / JCM 11954 / NBRC 16129 / PRD-1).